We begin with the raw amino-acid sequence, 485 residues long: Glucose-6-phosphate 1-dehydrogenase (485 aa).

NADP(+) is bound by residues Arg46, 89–90 (DI), and Lys144. His174, Lys178, Glu212, and Asp231 together coordinate substrate. Catalysis depends on His236, which acts as the Proton acceptor. Lys334 is a binding site for substrate.

The protein belongs to the glucose-6-phosphate dehydrogenase family.

The catalysed reaction is D-glucose 6-phosphate + NADP(+) = 6-phospho-D-glucono-1,5-lactone + NADPH + H(+). It functions in the pathway carbohydrate degradation; pentose phosphate pathway; D-ribulose 5-phosphate from D-glucose 6-phosphate (oxidative stage): step 1/3. Catalyzes the oxidation of glucose 6-phosphate to 6-phosphogluconolactone. This is Glucose-6-phosphate 1-dehydrogenase from Zymomonas mobilis subsp. mobilis (strain ATCC 31821 / ZM4 / CP4).